The chain runs to 131 residues: Profilin-2 (131 aa).

Belongs to the profilin family. Occurs in many kinds of cells as a complex with monomeric actin in a 1:1 ratio.

The protein localises to the cytoplasm. It is found in the cytoskeleton. Binds to actin and affects the structure of the cytoskeleton. At high concentrations, profilin prevents the polymerization of actin, whereas it enhances it at low concentrations. By binding to PIP2, it inhibits the formation of IP3 and DG. The sequence is that of Profilin-2 (PRO2) from Triticum aestivum (Wheat).